The sequence spans 472 residues: Ras-GEF domain-containing family member 1B (472 aa).

An N-terminal Ras-GEF domain is found at 34–164 (HDNNLLSGSL…MIQCLIRKLA (131 aa)). Positions 204–452 (DPYTLAQQLT…YLASYESEGP (249 aa)) constitute a Ras-GEF domain.

In terms of assembly, interacts with CCDC124 during cytokinesis. Interacts with Ras family proteins.

The protein resides in the early endosome. It is found in the late endosome. Its subcellular location is the midbody. Functionally, guanine nucleotide exchange factor (GEF) with specificity for RAP2A, it doesn't seems to activate other Ras family proteins (in vitro). The chain is Ras-GEF domain-containing family member 1B (RASGEF1B) from Bos taurus (Bovine).